Consider the following 1435-residue polypeptide: Gag-Pol polyprotein (1435 aa).

Glycine 2 is lipidated: N-myristoyl glycine; by host. The segment at 7–31 (VLSGGELDRWEKIRLRPGGKKKYKL) is interaction with Gp41. Residues 8-43 (LSGGELDRWEKIRLRPGGKKKYKLKHIVWASRELER) are interaction with host CALM1. The segment at 12–19 (ELDRWEKI) is interaction with host AP3D1. Positions 14-33 (DRWEKIRLRPGGKKKYKLKH) are interaction with membrane phosphatidylinositol 4,5-bisphosphate and RNA. The Nuclear export signal signature appears at 16 to 22 (WEKIRLR). The Nuclear localization signal signature appears at 26–32 (KKKYKLK). The interaction with membrane phosphatidylinositol 4,5-bisphosphate stretch occupies residues 73–77 (EELKS). The segment at 106 to 127 (EEQNKSKKKAQQAAADTGNSSQ) is disordered. Tyrosine 132 carries the post-translational modification Phosphotyrosine; by host. The tract at residues 189-227 (NTVGGHQAAMQMLKETINEEAAEWDRLHPVQAGPVAPGQ) is interaction with human PPIA/CYPA and NUP153. A dimerization/Multimerization of capsid protein p24 region spans residues 277-363 (YSPSSILDIK…GGPGHKARVL (87 aa)). CCHC-type zinc fingers lie at residues 390-407 (VKCFNCGKEGHIAKNCRA) and 411-428 (KGCWKCGKEGHQMKDCTE). Residues 489–493 (PQITL) form a dimerization of protease region. The Peptidase A2 domain maps to 508 to 577 (KEALLDTGAD…TPVNIIGRNL (70 aa)). Residue aspartate 513 is the For protease activity; shared with dimeric partner of the active site. Dimerization of protease regions lie at residues 537 to 543 (GIGGFIK) and 576 to 588 (NLLTQIGCTLNFP). Residues 631–821 (EGKISKIGPE…PPFLWMGYEL (191 aa)) form the Reverse transcriptase domain. Residues aspartate 697, aspartate 772, and aspartate 773 each contribute to the Mg(2+) site. The tract at residues 814–822 (FLWMGYELH) is RT 'primer grip'. Positions 985–1001 (WEAWWTDYWQATWIPEW) match the Tryptophan repeat motif motif. Positions 1021 to 1144 (IVGAETFYVD…VDKLVSAGIR (124 aa)) constitute an RNase H type-1 domain. Residues aspartate 1030, glutamate 1065, aspartate 1085, and aspartate 1136 each coordinate Mg(2+). The Integrase-type zinc finger occupies 1150-1191 (DGIDKAQEEHEKYHTNWRAMASDFNLPPVVAKEIVASCNKCQ). Residues histidine 1159, histidine 1163, cysteine 1187, and cysteine 1190 each coordinate Zn(2+). An Integrase catalytic domain is found at 1201–1351 (VDCSPGIWQL…SAGERIVDII (151 aa)). Mg(2+) is bound by residues aspartate 1211, aspartate 1263, and glutamate 1299. Positions 1370 to 1417 (FRVYYRDSRDPLWKGPAKLLWKGEGAVVIQDNSDIKVVPRRKAKIIRD) form a DNA-binding region, integrase-type.

As to quaternary structure, homotrimer; further assembles as hexamers of trimers. Interacts with gp41 (via C-terminus). Interacts with host CALM1; this interaction induces a conformational change in the Matrix protein, triggering exposure of the myristate group. Interacts with host AP3D1; this interaction allows the polyprotein trafficking to multivesicular bodies during virus assembly. Part of the pre-integration complex (PIC) which is composed of viral genome, matrix protein, Vpr and integrase. Homodimer; the homodimer further multimerizes as homohexamers or homopentamers. Interacts with human PPIA/CYPA; This interaction stabilizes the capsid. Interacts with human NUP153. Interacts with host PDZD8; this interaction stabilizes the capsid. Interacts with monkey TRIM5; this interaction destabilizes the capsid. In terms of assembly, homodimer, whose active site consists of two apposed aspartic acid residues. As to quaternary structure, heterodimer of p66 RT and p51 RT (RT p66/p51). Heterodimerization of RT is essential for DNA polymerase activity. The overall folding of the subdomains is similar in p66 RT and p51 RT but the spatial arrangements of the subdomains are dramatically different. Homotetramer; may further associate as a homohexadecamer. Part of the pre-integration complex (PIC) which is composed of viral genome, matrix protein, Vpr and integrase. Interacts with human SMARCB1/INI1 and human PSIP1/LEDGF isoform 1. Interacts with human KPNA3; this interaction might play a role in nuclear import of the pre-integration complex. Interacts with human NUP153; this interaction might play a role in nuclear import of the pre-integration complex. Mg(2+) serves as cofactor. In terms of processing, specific enzymatic cleavages by the viral protease yield mature proteins. The protease is released by autocatalytic cleavage. The polyprotein is cleaved during and after budding, this process is termed maturation. Proteolytic cleavage of p66 RT removes the RNase H domain to yield the p51 RT subunit. Nucleocapsid protein p7 might be further cleaved after virus entry. Post-translationally, tyrosine phosphorylated presumably in the virion by a host kinase. Phosphorylation is apparently not a major regulator of membrane association. Phosphorylated possibly by host MAPK1; this phosphorylation is necessary for Pin1-mediated virion uncoating. In terms of processing, methylated by host PRMT6, impairing its function by reducing RNA annealing and the initiation of reverse transcription.

It is found in the host cell membrane. It localises to the host endosome. The protein resides in the host multivesicular body. Its subcellular location is the virion membrane. The protein localises to the host nucleus. It is found in the host cytoplasm. It localises to the virion. The catalysed reaction is Specific for a P1 residue that is hydrophobic, and P1' variable, but often Pro.. It catalyses the reaction Endohydrolysis of RNA in RNA/DNA hybrids. Three different cleavage modes: 1. sequence-specific internal cleavage of RNA. Human immunodeficiency virus type 1 and Moloney murine leukemia virus enzymes prefer to cleave the RNA strand one nucleotide away from the RNA-DNA junction. 2. RNA 5'-end directed cleavage 13-19 nucleotides from the RNA end. 3. DNA 3'-end directed cleavage 15-20 nucleotides away from the primer terminus.. The enzyme catalyses 3'-end directed exonucleolytic cleavage of viral RNA-DNA hybrid.. It carries out the reaction DNA(n) + a 2'-deoxyribonucleoside 5'-triphosphate = DNA(n+1) + diphosphate. With respect to regulation, protease: The viral protease is inhibited by many synthetic protease inhibitors (PIs), such as amprenavir, atazanavir, indinavir, loprinavir, nelfinavir, ritonavir and saquinavir. Use of protease inhibitors in tritherapy regimens permit more ambitious therapeutic strategies. Reverse transcriptase/ribonuclease H: RT can be inhibited either by nucleoside RT inhibitors (NRTIs) or by non nucleoside RT inhibitors (NNRTIs). NRTIs act as chain terminators, whereas NNRTIs inhibit DNA polymerization by binding a small hydrophobic pocket near the RT active site and inducing an allosteric change in this region. Classical NRTIs are abacavir, adefovir (PMEA), didanosine (ddI), lamivudine (3TC), stavudine (d4T), tenofovir (PMPA), zalcitabine (ddC), and zidovudine (AZT). Classical NNRTIs are atevirdine (BHAP U-87201E), delavirdine, efavirenz (DMP-266), emivirine (I-EBU), and nevirapine (BI-RG-587). The tritherapies used as a basic effective treatment of AIDS associate two NRTIs and one NNRTI. In terms of biological role, mediates, with Gag polyprotein, the essential events in virion assembly, including binding the plasma membrane, making the protein-protein interactions necessary to create spherical particles, recruiting the viral Env proteins, and packaging the genomic RNA via direct interactions with the RNA packaging sequence (Psi). Gag-Pol polyprotein may regulate its own translation, by the binding genomic RNA in the 5'-UTR. At low concentration, the polyprotein would promote translation, whereas at high concentration, the polyprotein would encapsidate genomic RNA and then shut off translation. Functionally, targets the polyprotein to the plasma membrane via a multipartite membrane-binding signal, that includes its myristoylated N-terminus. Matrix protein is part of the pre-integration complex. Implicated in the release from host cell mediated by Vpu. Binds to RNA. Forms the conical core that encapsulates the genomic RNA-nucleocapsid complex in the virion. Most core are conical, with only 7% tubular. The core is constituted by capsid protein hexamer subunits. The core is disassembled soon after virion entry. Host restriction factors such as TRIM5-alpha or TRIMCyp bind retroviral capsids and cause premature capsid disassembly, leading to blocks in reverse transcription. Capsid restriction by TRIM5 is one of the factors which restricts HIV-1 to the human species. Host PIN1 apparently facilitates the virion uncoating. On the other hand, interactions with PDZD8 or CYPA stabilize the capsid. Its function is as follows. Encapsulates and protects viral dimeric unspliced genomic RNA (gRNA). Binds these RNAs through its zinc fingers. Acts as a nucleic acid chaperone which is involved in rearangement of nucleic acid secondary structure during gRNA retrotranscription. Also facilitates template switch leading to recombination. As part of the polyprotein, participates in gRNA dimerization, packaging, tRNA incorporation and virion assembly. In terms of biological role, aspartyl protease that mediates proteolytic cleavages of Gag and Gag-Pol polyproteins during or shortly after the release of the virion from the plasma membrane. Cleavages take place as an ordered, step-wise cascade to yield mature proteins. This process is called maturation. Displays maximal activity during the budding process just prior to particle release from the cell. Also cleaves Nef and Vif, probably concomitantly with viral structural proteins on maturation of virus particles. Hydrolyzes host EIF4GI and PABP1 in order to shut off the capped cellular mRNA translation. The resulting inhibition of cellular protein synthesis serves to ensure maximal viral gene expression and to evade host immune response. Also mediates cleavage of host YTHDF3. Mediates cleavage of host CARD8, thereby activating the CARD8 inflammasome, leading to the clearance of latent HIV-1 in patient CD4(+) T-cells after viral reactivation; in contrast, HIV-1 can evade CARD8-sensing when its protease remains inactive in infected cells prior to viral budding. Functionally, multifunctional enzyme that converts the viral RNA genome into dsDNA in the cytoplasm, shortly after virus entry into the cell. This enzyme displays a DNA polymerase activity that can copy either DNA or RNA templates, and a ribonuclease H (RNase H) activity that cleaves the RNA strand of RNA-DNA heteroduplexes in a partially processive 3' to 5' endonucleasic mode. Conversion of viral genomic RNA into dsDNA requires many steps. A tRNA(3)-Lys binds to the primer-binding site (PBS) situated at the 5'-end of the viral RNA. RT uses the 3' end of the tRNA primer to perform a short round of RNA-dependent minus-strand DNA synthesis. The reading proceeds through the U5 region and ends after the repeated (R) region which is present at both ends of viral RNA. The portion of the RNA-DNA heteroduplex is digested by the RNase H, resulting in a ssDNA product attached to the tRNA primer. This ssDNA/tRNA hybridizes with the identical R region situated at the 3' end of viral RNA. This template exchange, known as minus-strand DNA strong stop transfer, can be either intra- or intermolecular. RT uses the 3' end of this newly synthesized short ssDNA to perform the RNA-dependent minus-strand DNA synthesis of the whole template. RNase H digests the RNA template except for two polypurine tracts (PPTs) situated at the 5'-end and near the center of the genome. It is not clear if both polymerase and RNase H activities are simultaneous. RNase H probably can proceed both in a polymerase-dependent (RNA cut into small fragments by the same RT performing DNA synthesis) and a polymerase-independent mode (cleavage of remaining RNA fragments by free RTs). Secondly, RT performs DNA-directed plus-strand DNA synthesis using the PPTs that have not been removed by RNase H as primers. PPTs and tRNA primers are then removed by RNase H. The 3' and 5' ssDNA PBS regions hybridize to form a circular dsDNA intermediate. Strand displacement synthesis by RT to the PBS and PPT ends produces a blunt ended, linear dsDNA copy of the viral genome that includes long terminal repeats (LTRs) at both ends. Catalyzes viral DNA integration into the host chromosome, by performing a series of DNA cutting and joining reactions. This enzyme activity takes place after virion entry into a cell and reverse transcription of the RNA genome in dsDNA. The first step in the integration process is 3' processing. This step requires a complex comprising the viral genome, matrix protein, Vpr and integrase. This complex is called the pre-integration complex (PIC). The integrase protein removes 2 nucleotides from each 3' end of the viral DNA, leaving recessed CA OH's at the 3' ends. In the second step, the PIC enters cell nucleus. This process is mediated through integrase and Vpr proteins, and allows the virus to infect a non dividing cell. This ability to enter the nucleus is specific of lentiviruses, other retroviruses cannot and rely on cell division to access cell chromosomes. In the third step, termed strand transfer, the integrase protein joins the previously processed 3' ends to the 5' ends of strands of target cellular DNA at the site of integration. The 5'-ends are produced by integrase-catalyzed staggered cuts, 5 bp apart. A Y-shaped, gapped, recombination intermediate results, with the 5'-ends of the viral DNA strands and the 3' ends of target DNA strands remaining unjoined, flanking a gap of 5 bp. The last step is viral DNA integration into host chromosome. This involves host DNA repair synthesis in which the 5 bp gaps between the unjoined strands are filled in and then ligated. Since this process occurs at both cuts flanking the HIV genome, a 5 bp duplication of host DNA is produced at the ends of HIV-1 integration. Alternatively, Integrase may catalyze the excision of viral DNA just after strand transfer, this is termed disintegration. The sequence is that of Gag-Pol polyprotein (gag-pol) from Human immunodeficiency virus type 1 group M subtype B (strain 89.6) (HIV-1).